The primary structure comprises 122 residues: Cytochrome c3 hydrogenase large chain (122 aa).

Fe cation serves as cofactor.

It carries out the reaction 2 Fe(III)-[cytochrome c3] + H2 = 2 Fe(II)-[cytochrome c3] + 2 H(+). This chain is Cytochrome c3 hydrogenase large chain (hoxG), found in Acidithiobacillus ferrooxidans (Thiobacillus ferrooxidans).